We begin with the raw amino-acid sequence, 176 residues long: NAD(P)H-quinone oxidoreductase subunit 6, chloroplastic (176 aa).

Helical transmembrane passes span 10–30 (FLLVFLGSGLILGGLGVVLLT), 32–52 (PIYSAFSLGLVLVCISLFYIL), 61–81 (AQLLIYVGAINVLILFAVMFM), 92–112 (LWTIGNGLTSLVCTSILVSLI), and 152–172 (FFLPFEFISIILLVALIGAIA).

The protein belongs to the complex I subunit 6 family. NDH is composed of at least 16 different subunits, 5 of which are encoded in the nucleus.

It is found in the plastid. It localises to the chloroplast thylakoid membrane. It catalyses the reaction a plastoquinone + NADH + (n+1) H(+)(in) = a plastoquinol + NAD(+) + n H(+)(out). It carries out the reaction a plastoquinone + NADPH + (n+1) H(+)(in) = a plastoquinol + NADP(+) + n H(+)(out). Functionally, NDH shuttles electrons from NAD(P)H:plastoquinone, via FMN and iron-sulfur (Fe-S) centers, to quinones in the photosynthetic chain and possibly in a chloroplast respiratory chain. The immediate electron acceptor for the enzyme in this species is believed to be plastoquinone. Couples the redox reaction to proton translocation, and thus conserves the redox energy in a proton gradient. The sequence is that of NAD(P)H-quinone oxidoreductase subunit 6, chloroplastic (ndhG) from Gossypium hirsutum (Upland cotton).